Reading from the N-terminus, the 309-residue chain is High-affinity zinc uptake system protein AztC (309 aa).

Residues 1–24 (MKDWLFRIATCSIMTFSSLAAAQA) form the signal peptide. H61 contacts Zn(2+). The interval 117 to 132 (GGGHYHYIDGKAVFHA) is D-loop. Position 138 (H138) interacts with Zn(2+). Residues C158 and C165 are joined by a disulfide bond. Residue H204 participates in Zn(2+) binding. The tract at residues 222–229 (QGVSTESE) is Z-loop. Position 279 (D279) interacts with Zn(2+).

Belongs to the bacterial solute-binding protein 9 family. In terms of assembly, monomer.

It localises to the periplasm. Its function is as follows. Part of the ATP-binding cassette (ABC) transport system AztABCD involved in zinc import. Binds zinc with high affinity and specificity and delivers it to the membrane permease for translocation into the cytoplasm. The protein is High-affinity zinc uptake system protein AztC of Paracoccus denitrificans (strain Pd 1222).